The chain runs to 393 residues: Formate-dependent phosphoribosylglycinamide formyltransferase (393 aa).

N(1)-(5-phospho-beta-D-ribosyl)glycinamide-binding positions include 22-23 (EL) and glutamate 82. Residues arginine 114, lysine 155, 160-165 (SSGKGQ), 195-198 (EGFI), and glutamate 203 contribute to the ATP site. An ATP-grasp domain is found at 119-308 (RLAAEELDLP…QFALHARAIL (190 aa)). The Mg(2+) site is built by glutamate 267 and glutamate 279. Residues aspartate 286, lysine 356, and 363-364 (RR) contribute to the N(1)-(5-phospho-beta-D-ribosyl)glycinamide site.

Belongs to the PurK/PurT family. Homodimer.

The catalysed reaction is N(1)-(5-phospho-beta-D-ribosyl)glycinamide + formate + ATP = N(2)-formyl-N(1)-(5-phospho-beta-D-ribosyl)glycinamide + ADP + phosphate + H(+). It functions in the pathway purine metabolism; IMP biosynthesis via de novo pathway; N(2)-formyl-N(1)-(5-phospho-D-ribosyl)glycinamide from N(1)-(5-phospho-D-ribosyl)glycinamide (formate route): step 1/1. In terms of biological role, involved in the de novo purine biosynthesis. Catalyzes the transfer of formate to 5-phospho-ribosyl-glycinamide (GAR), producing 5-phospho-ribosyl-N-formylglycinamide (FGAR). Formate is provided by PurU via hydrolysis of 10-formyl-tetrahydrofolate. The sequence is that of Formate-dependent phosphoribosylglycinamide formyltransferase from Pseudomonas fluorescens (strain ATCC BAA-477 / NRRL B-23932 / Pf-5).